Reading from the N-terminus, the 273-residue chain is Large ribosomal subunit protein uL2 (273 aa).

The disordered stretch occupies residues 224 to 263 (AMNPVDHPHGGGEGRNFGKHPVTPWGLQTKGKKTRKNKRT). Basic residues predominate over residues 253–263 (KGKKTRKNKRT).

The protein belongs to the universal ribosomal protein uL2 family. As to quaternary structure, part of the 50S ribosomal subunit. Forms a bridge to the 30S subunit in the 70S ribosome.

One of the primary rRNA binding proteins. Required for association of the 30S and 50S subunits to form the 70S ribosome, for tRNA binding and peptide bond formation. It has been suggested to have peptidyltransferase activity; this is somewhat controversial. Makes several contacts with the 16S rRNA in the 70S ribosome. This chain is Large ribosomal subunit protein uL2, found in Buchnera aphidicola subsp. Schizaphis graminum (strain Sg).